A 241-amino-acid chain; its full sequence is Probable transcriptional regulator PhnF (241 aa).

Positions Pro11–Arg78 constitute an HTH gntR-type domain. A DNA-binding region (H-T-H motif) is located at residues Glu38–Asp57.

In terms of biological role, belongs to an operon involved in alkylphosphonate uptake and C-P lyase. Exact function not known. By similarity could be a transcriptional regulator. The chain is Probable transcriptional regulator PhnF (phnF) from Escherichia coli (strain K12).